The chain runs to 331 residues: Geranylgeranyl transferase type-2 subunit beta (331 aa).

G2 bears the N-acetylglycine mark. T3 carries the phosphothreonine modification. 6 PFTB repeats span residues 20–61 (LEKH…DLMG), 68–109 (REEI…TLYD), 116–157 (INKV…ALLG), 164–205 (VEKA…AITS), 212–253 (SDLL…KIIG), and 260–302 (REKL…SLLG). Geranylgeranyl diphosphate is bound at residue 190 to 192 (HAG). Positions 238 and 240 each coordinate Zn(2+). 241-244 (YSWW) contacts geranylgeranyl diphosphate. Residue H290 coordinates Zn(2+).

Belongs to the protein prenyltransferase subunit beta family. Heterotrimer composed of RABGGTA, RABGGTB and CHM; within this trimer, RABGGTA and RABGGTB form the catalytic component B, while CHM (component A) mediates peptide substrate binding. The Rab GGTase dimer (RGGT) interacts with CHM (component A) prior to Rab protein binding; the association is stabilized by geranylgeranyl pyrophosphate (GGpp). The CHM:RGGT:Rab complex is destabilized by GGpp. Interaction of RABGGTB with prenylated PTP4A2 precludes its association with RABGGTA and inhibits enzyme activity. Interacts with CHODL. Interacts with non-phosphorylated form of RAB8A; phosphorylation of RAB8A at 'Thr-72' disrupts this interaction. Requires Zn(2+) as cofactor.

It carries out the reaction geranylgeranyl diphosphate + L-cysteinyl-[protein] = S-geranylgeranyl-L-cysteinyl-[protein] + diphosphate. With respect to regulation, the enzymatic reaction requires the aid of a Rab escort protein (also called component A). Functionally, catalyzes the transfer of a geranylgeranyl moiety from geranylgeranyl diphosphate to both cysteines of Rab proteins with the C-terminal sequence -XXCC, -XCXC and -CCXX, such as RAB1A, RAB3A, RAB5A and RAB7A. In Bos taurus (Bovine), this protein is Geranylgeranyl transferase type-2 subunit beta (RABGGTB).